Reading from the N-terminus, the 186-residue chain is MGSLFGRVAALRALLCGPRFQCLLVRPSSGGPPWPQERTLVAVKPDGVQRRLVGTVIQRFERRGFKLVGMKMLQAPESILAEHYRDLQRKPFYPALISYMSSGPVVAMVWEGPNVVHISRAMIGHTDSTEAAPGTIRGDFSVHISRNVIHASDSVDGAQREIELWFQSSELLNWADGGHHSSCYPA.

The transit peptide at 1-32 directs the protein to the mitochondrion; the sequence is MGSLFGRVAALRALLCGPRFQCLLVRPSSGGP. ATP-binding residues include Lys-44, Phe-92, Arg-120, Thr-126, Arg-137, and Asn-147. The active-site Pros-phosphohistidine intermediate is His-150.

This sequence belongs to the NDK family. As to quaternary structure, homohexamer. Interacts with OPA1. Interacts with CAPN8. Mg(2+) is required as a cofactor. In terms of tissue distribution, expressed in the base region of the oxyntic and pyloric mucosae.

It is found in the mitochondrion intermembrane space. The protein localises to the mitochondrion matrix. The enzyme catalyses a 2'-deoxyribonucleoside 5'-diphosphate + ATP = a 2'-deoxyribonucleoside 5'-triphosphate + ADP. The catalysed reaction is a ribonucleoside 5'-diphosphate + ATP = a ribonucleoside 5'-triphosphate + ADP. In terms of biological role, major role in the synthesis of nucleoside triphosphates other than ATP. The ATP gamma phosphate is transferred to the NDP beta phosphate via a ping-pong mechanism, using a phosphorylated active-site intermediate. Through the catalyzed exchange of gamma-phosphate between di- and triphosphonucleosides participates in regulation of intracellular nucleotide homeostasis. Binds to anionic phospholipids, predominantly to cardiolipin; the binding inhibits its phosphotransfer activity. Acts as a mitochondria-specific NDK; its association with cardiolipin-containing mitochondrial inner membrane is coupled to respiration suggesting that ADP locally regenerated in the mitochondrion innermembrane space by its activity is directly taken up via ANT ADP/ATP translocase into the matrix space to stimulate respiratory ATP regeneration. Proposed to increase GTP-loading on dynamin-related GTPase OPA1 in mitochondria. In vitro can induce liposome cross-linking suggesting that it can cross-link inner and outer membranes to form contact sites, and promotes intermembrane migration of anionic phosphoplipids. Promotes the redistribution of cardiolipin between the mitochondrial inner membrane and outer membrane which is implicated in pro-apoptotic signaling. The polypeptide is Nucleoside diphosphate kinase, mitochondrial (Nme4) (Mus musculus (Mouse)).